The sequence spans 64 residues: Large ribosomal subunit protein bL35 (64 aa).

Residues 1-27 form a disordered region; that stretch reads MPKMKTKSGAKKRFKPTASGFKHKHAF.

The protein belongs to the bacterial ribosomal protein bL35 family.

This chain is Large ribosomal subunit protein bL35, found in Azotobacter vinelandii (strain DJ / ATCC BAA-1303).